We begin with the raw amino-acid sequence, 479 residues long: Ribosomal RNA small subunit methyltransferase F (479 aa).

Residues 128–134 (ASAPGSK), E152, D179, and D197 contribute to the S-adenosyl-L-methionine site. Residue C250 is the Nucleophile of the active site.

It belongs to the class I-like SAM-binding methyltransferase superfamily. RsmB/NOP family.

The protein localises to the cytoplasm. It carries out the reaction cytidine(1407) in 16S rRNA + S-adenosyl-L-methionine = 5-methylcytidine(1407) in 16S rRNA + S-adenosyl-L-homocysteine + H(+). In terms of biological role, specifically methylates the cytosine at position 1407 (m5C1407) of 16S rRNA. The chain is Ribosomal RNA small subunit methyltransferase F from Shewanella halifaxensis (strain HAW-EB4).